The following is a 407-amino-acid chain: ATP-citrate synthase subunit alpha chain protein 1 (407 aa).

The citrate site is built by Asn327, Thr329, and Arg360.

Belongs to the succinate/malate CoA ligase beta subunit family. Heterooctamer of 4 alpha and 4 beta chains.

It is found in the cytoplasm. The protein localises to the cytosol. It catalyses the reaction oxaloacetate + acetyl-CoA + ADP + phosphate = citrate + ATP + CoA. ATP citrate-lyase is the primary enzyme responsible for the synthesis of cytosolic acetyl-CoA, used for the elongation of fatty acids and biosynthesis of isoprenoids, flavonoids and malonated derivatives. May supply substrate to the cytosolic acetyl-CoA carboxylase, which generates the malonyl-CoA used for the synthesis of a multitude of compounds, including very long chain fatty acids and flavonoids. In contrast to all known animal ACL enzymes having a homomeric structure, plant ACLs are composed of alpha and beta chains. In Oryza sativa subsp. japonica (Rice), this protein is ATP-citrate synthase subunit alpha chain protein 1 (ACLA-1).